Consider the following 117-residue polypeptide: Large ribosomal subunit protein uL23 (117 aa).

This sequence belongs to the universal ribosomal protein uL23 family. Part of the 50S ribosomal subunit. Contacts protein L29, and trigger factor when it is bound to the ribosome.

Functionally, one of the early assembly proteins it binds 23S rRNA. One of the proteins that surrounds the polypeptide exit tunnel on the outside of the ribosome. Forms the main docking site for trigger factor binding to the ribosome. The chain is Large ribosomal subunit protein uL23 from Ruminiclostridium cellulolyticum (strain ATCC 35319 / DSM 5812 / JCM 6584 / H10) (Clostridium cellulolyticum).